A 347-amino-acid polypeptide reads, in one-letter code: NADH-quinone oxidoreductase subunit H 1 (347 aa).

Transmembrane regions (helical) follow at residues 13 to 33, 50 to 70, 82 to 102, 115 to 135, 161 to 181, 198 to 218, 263 to 283, 286 to 306, and 321 to 341; these read IIMI…IAYV, PNVV…KFVF, AVFL…WAVV, VGIL…IMGG, IGFV…TDIV, FLDW…ISAL, CALT…IWIL, VPGI…FAMV, and LGWK…AFVL.

This sequence belongs to the complex I subunit 1 family. NDH-1 is composed of 14 different subunits. Subunits NuoA, H, J, K, L, M, N constitute the membrane sector of the complex.

Its subcellular location is the cell inner membrane. It carries out the reaction a quinone + NADH + 5 H(+)(in) = a quinol + NAD(+) + 4 H(+)(out). Its function is as follows. NDH-1 shuttles electrons from NADH, via FMN and iron-sulfur (Fe-S) centers, to quinones in the respiratory chain. The immediate electron acceptor for the enzyme in this species is believed to be ubiquinone. Couples the redox reaction to proton translocation (for every two electrons transferred, four hydrogen ions are translocated across the cytoplasmic membrane), and thus conserves the redox energy in a proton gradient. This subunit may bind ubiquinone. The polypeptide is NADH-quinone oxidoreductase subunit H 1 (Rhizobium etli (strain ATCC 51251 / DSM 11541 / JCM 21823 / NBRC 15573 / CFN 42)).